Here is a 382-residue protein sequence, read N- to C-terminus: Acetyltransferase eriL (382 aa).

6 helical membrane passes run 5-25 (LQPL…LGAV), 33-53 (ALLF…TTTG), 59-79 (IVTW…LLIN), 146-166 (TLFY…SPVF), 192-212 (LWSY…ALGV), and 335-355 (GYMW…DPQF).

Belongs to the wax synthase family.

The protein localises to the membrane. It catalyses the reaction cyathatriol + acetyl-CoA = 11-O-acetylcyathatriol + CoA. It carries out the reaction cyathin A3 + acetyl-CoA = 11-O-acetylcyathin A3 + CoA. The protein operates within secondary metabolite biosynthesis. Functionally, acetyltransferase; part of the gene cluster that mediates the biosynthesis of erinacines, cyathane-xylosides that show unique biological activities, including leishmanicidal activity, stimulating activity for nerve growth-factor synthesis, and agonistic activity toward the kappa opioid receptor. Within the pathway, eriL converts cyathatriol into 11-O-acetyl-cyathatriol. EriL is also able to acetylate cyathin A3 to produce 11-O-acetylcyathin A3. The first step of the erinacines biosynthesis pathway is catalyzed by the geranylgeranyl diphosphate (GGPP) synthase eriE via conversion of farnesyl pyrophosphate and isopentyl pyrophosphate into geranylgeranyl pyrophosphate (GGPP). GGPP is then substrate of the diterpene cyclase eriG for the production of cyatha-3,12-diene. The cytochrome P450 monooxygenase eriI then hydroxylates cyatha-3,12-diene at C-14 of the seven-membered ring to produce erinacol, which is further hydroxylated at C-15 by the cytochrome P450 monooxygenase eriC to yield cyathadiol. The cytochrome P450 monooxygenase eriA then catalyzes C-11 hydroxylation in the presence of the short chain dehydrogenase/reductase (SDR) eriH, which leads to the production of cyathatriol. The acetyltransferase eriL converts cyathatriol into 11-O-acetyl-cyathatriol. The SDR eriH catalyzes further oxidation of 11-O-acetyl-cyathatriol into 1-O-acetylcyathin A3. Finally, the glycosyl transferase eriJ tranfers xylose from UDP-xylose onto C-14 of 11-O-acetyl-cyathatriol to form eracine Q. EriJ is also able to convert 11-O-acetyl-cyathatriol to eracine Q2 by using UDP-D-glucose as cosubstrate, but at a lower rate. The protein is Acetyltransferase eriL of Hericium erinaceus (Lion's mane mushroom).